Reading from the N-terminus, the 385-residue chain is Nod factor hydrolase protein 1 (385 aa).

Residues 1–21 (MANFLKLKQFLTLVLILLALA) form the signal peptide. The GH18 domain occupies 36 to 385 (RVKGIYWIEN…TASKAWRPES (350 aa)). 2 N-linked (GlcNAc...) asparagine glycosylation sites follow: Asn-115 and Asn-134. The Proton donor role is filled by Glu-153. Residues Asn-233 and Asn-247 are each glycosylated (N-linked (GlcNAc...) asparagine).

This sequence belongs to the glycosyl hydrolase 18 family. Chitinase class V subfamily.

Its function is as follows. Symbiotic enzyme that hydrolytically inactivates Nod factors (NFs) with a C16:2 acyl chain produced by the microsymbiont Sinorhizobium meliloti. NFs are lipo-chitooligosaccharide signaling molecules produced by nitrogen-fixing rhizobia to initiate nodulation (symbiosis) on the roots of legumes. Controls NF hydrolysis at the stage of root hair infection. Involved in the regulation of growth and branching of mature nodules. Modulates NF levels and signaling to complete transition of infected nodules to functional nitrogen-fixing organs. Lacks chitinase activity in vitro toward glycol chitin, carboxymethyl-chitin, colloidal chitin, and the chitin oligosaccharides (N-acetylglucosamine) (GlcNAc)6 and (GlcNAc)5. This chain is Nod factor hydrolase protein 1, found in Medicago truncatula (Barrel medic).